Consider the following 363-residue polypeptide: Aminomethyltransferase (363 aa).

This sequence belongs to the GcvT family. In terms of assembly, the glycine cleavage system is composed of four proteins: P, T, L and H.

The catalysed reaction is N(6)-[(R)-S(8)-aminomethyldihydrolipoyl]-L-lysyl-[protein] + (6S)-5,6,7,8-tetrahydrofolate = N(6)-[(R)-dihydrolipoyl]-L-lysyl-[protein] + (6R)-5,10-methylene-5,6,7,8-tetrahydrofolate + NH4(+). Its function is as follows. The glycine cleavage system catalyzes the degradation of glycine. This chain is Aminomethyltransferase, found in Saccharophagus degradans (strain 2-40 / ATCC 43961 / DSM 17024).